The chain runs to 600 residues: Repressor of filamentous growth 1 (600 aa).

The span at 1-14 shows a compositional bias: polar residues; the sequence is MSTAIYYSTHNNMH. Disordered regions lie at residues 1-59, 112-160, 180-200, 266-337, 427-549, and 564-600; these read MSTA…NSAN, NGGY…TDIS, GIDG…NNNN, AEEE…SRDN, STTS…GYDN, and QQGL…QPPQ. Low complexity-rich tracts occupy residues 20–39 and 47–59; these read TNGS…SNPN and INNN…NSAN. The segment covering 131–160 has biased composition (polar residues); that stretch reads FDTSYSNQTTPTSAYTNFNNDSTHSPTDIS. The span at 188–200 shows a compositional bias: low complexity; sequence NNNNNNNNNNNNN. The HMG box DNA-binding region spans 212-281; that stretch reads IPRPRNAFIL…NHAKKYPGYR (70 aa). Basic residues predominate over residues 272-289; it reads NHAKKYPGYRYTPRRNGR. The span at 297-312 shows a compositional bias: low complexity; the sequence is KNKPLPNNKSNSISGM. Residues 313 to 322 show a composition bias toward gly residues; the sequence is SGSGGGGGSI. The span at 427–470 shows a compositional bias: low complexity; it reads STTSTTAPTTTTTTTTNASSIGLSVPPTATTTSTSSQPTSANSQ. Residues 481–496 are compositionally biased toward polar residues; it reads PVSSTHHQSSISEIAA. Positions 497-506 are enriched in low complexity; that stretch reads QQQQQQQQQQ. Polar residues predominate over residues 507-547; that stretch reads FMYNTNYSTIPPNNTTTMQQHSAGTGNDYSLNGNNSGNTGY. 2 stretches are compositionally biased toward low complexity: residues 564–574 and 581–600; these read QQGLQVQQQGQ and HAAQ…QPPQ.

The protein localises to the nucleus. Functionally, transcription regulator that functions in both the positive and negative regulation of filamentous growth, depending upon the environmental conditions. Recruits the TUP1/SSN6 general repression complex to achieve repression. Regulates genes encoding cell wall components that are specifically expressed in the filamentous forms such as HWP1, RBT1, HYR1, ECE1, ALS1, RBT4 and RBT5. In Candida albicans (strain SC5314 / ATCC MYA-2876) (Yeast), this protein is Repressor of filamentous growth 1 (RFG1).